The primary structure comprises 214 residues: Large ribosomal subunit protein uL16-like (214 aa).

It belongs to the universal ribosomal protein uL16 family. In terms of assembly, component of the 60S large ribosomal subunit (LSU).

The protein localises to the cytoplasm. Testis-specific component of the ribosome, which is required for the transition from prophase to metaphase in male meiosis I. Compensates for the inactivated X-linked RPL10 paralog during spermatogenesis. The ribosome is a large ribonucleoprotein complex responsible for the synthesis of proteins in the cell. The small ribosomal subunit (SSU) binds messenger RNAs (mRNAs) and translates the encoded message by selecting cognate aminoacyl-transfer RNA (tRNA) molecules. The large subunit (LSU) contains the ribosomal catalytic site termed the peptidyl transferase center (PTC), which catalyzes the formation of peptide bonds, thereby polymerizing the amino acids delivered by tRNAs into a polypeptide chain. The nascent polypeptides leave the ribosome through a tunnel in the LSU and interact with protein factors that function in enzymatic processing, targeting, and the membrane insertion of nascent chains at the exit of the ribosomal tunnel. The polypeptide is Large ribosomal subunit protein uL16-like (RPL10L) (Macaca fascicularis (Crab-eating macaque)).